The chain runs to 137 residues: Nucleoside diphosphate kinase (137 aa).

The ATP site is built by Lys-9, Phe-57, Arg-85, Thr-91, Arg-102, and Asn-112. The Pros-phosphohistidine intermediate role is filled by His-115.

This sequence belongs to the NDK family. In terms of assembly, homotetramer. Mg(2+) serves as cofactor.

The protein localises to the cytoplasm. The enzyme catalyses a 2'-deoxyribonucleoside 5'-diphosphate + ATP = a 2'-deoxyribonucleoside 5'-triphosphate + ADP. It carries out the reaction a ribonucleoside 5'-diphosphate + ATP = a ribonucleoside 5'-triphosphate + ADP. Functionally, major role in the synthesis of nucleoside triphosphates other than ATP. The ATP gamma phosphate is transferred to the NDP beta phosphate via a ping-pong mechanism, using a phosphorylated active-site intermediate. The sequence is that of Nucleoside diphosphate kinase from Leptospira borgpetersenii serovar Hardjo-bovis (strain L550).